A 122-amino-acid polypeptide reads, in one-letter code: Large ribosomal subunit protein uL18 (122 aa).

The protein belongs to the universal ribosomal protein uL18 family. In terms of assembly, part of the 50S ribosomal subunit; part of the 5S rRNA/L5/L18/L25 subcomplex. Contacts the 5S and 23S rRNAs.

Functionally, this is one of the proteins that bind and probably mediate the attachment of the 5S RNA into the large ribosomal subunit, where it forms part of the central protuberance. The chain is Large ribosomal subunit protein uL18 from Buchnera aphidicola subsp. Acyrthosiphon pisum (strain 5A).